We begin with the raw amino-acid sequence, 1669 residues long: MALLRRLFYRKPPDRLLEIADRVYVFDCCFSTETMEQFEYKNYLDNIVLQLREQFVDSSLMVFNFRDEGKSLVSGLFSLYGITVKDYPCQYLGCPLLPLEMVLHFLRLSERWLMLEGQQNFLLMHCEKGGWPVLAFMLAGLLLYMKQYNGEERTLVMVYKQAPKELLQMLTTLNPQPSHLRYLQYICKMDDELEWPIQPIPFTLDCVILREVPNFDGVGGCRPIVRVYGQDFLTVDKRCNVMLPPSKPRKHARRYKQQADNISVKLNVGSCVQGDVVLECLHIDDSLEDERLMFRVMFNTYFIQSHILPLNFENIDVSWDAEQRFTKKFKAEVLFSEFDGESDASIEVASDYDDEVEVGSIDVFFEAVEIFSNLDSQEGQRDAEILSITSTECSPRAELMKTAPFSHFDMEIGLGGSQKNKIDGMVLSLEKSDEKCTSAEGDIIQNNITRVVRSSSANTTDGDRDTMNSSCYGGKVDGCIVEKNNSNKEILTDSNEDSGIENVLVKEVIISETNSLKDIQMIKEVIISEVTTSKPVIEVDTIGTELSDVVHNSETITHAEANNEEEVLVTLKQNEGDNLVEECIYYGNSIMIKPEKYRKKEKSIIGSTIGVVPDSTEENSRVGLLLSVKPHLDSTGTYHDLNSPLQKIDLLNVSNTNCVEEQTKGMEASISNSYGQPSNLSSLNLQPQGSSFQANGDPTCANTSTDANESTQLELKRKSFLSLSTSSIFSPLSPRRNLLRSTSTDLSFLSPLQTKSNQHSIPCSSGRDDFASSYGPPPNIPCTSLRTSKVSSLVHPSLRPLRTVSSLSQSSFEEYLDISPPSPTFHEKHQQHFNLDPPSLIPPWQLRLAKTKENEIYPCTLSFLPLSPSNKYAHHPPFPPPPPPPHVLCTQNNSRTQISEYEQGRVEGPCPSSSYGQSILNSHDVSLSLPQKDSSCIAITNGPSSSNYVEEVPMETILNQPTLSIPLEACKDELLHCKENGGIPIPPPPPPLCDHAKKYTRIPLPPPPPEGSHGILATTSTELIDAGPQLPPLSHLEWKRCPHHPPERPHYLPGEVGGAPSPPSPPPPQRENTSVGIQGGIPPLPPPLPPTLGDYGVAPPPPSIGAGAPPPPPPPGGITGVPPPPPIGGLGGHQAPPAPPLPEGIGGVPPPPPVGGLGGPPAPPPPAGFRGGTPPPNAHGGVAPPPPPPRGHGGVGGPPTPPGAPAPPMPPGVPGGPPPPPGGRGLPAPPGGRGVVGHGLTRSLGLNSAATARRSTLKPLHWVKVTRAMHGSLWAEIQKQADANSHSEFDVKELESLFAIAPKTKGGSKSDGASKSLGSKPDKVHLIDLRRANNTEIMLTKIKMPLPDMMSAALALDDSVLDADQLENLIKFCPTKEEMELLKNYTGDKETLGKCEQFFLELMKVPRVESKFRIFAFKIQFQSQIRDVRKNLLTVSSACEELRGSEKLKVIMEKILFLGNKLNQGTPRGQALGFRLDSLLKLTDTRANNSRMTLMHFLCKGLADKSPHLLDFYEEFVNLEAASKLQLKALAEEQQAVVKGLQKVEQELAASESDGPVSEVFRKTLKEFTDASGADVRSLSALYAEVGKSADALAYYFGEDPAKCPFEQVTSTLLNFVGLFRKAHEENIKQIEADKKKAQKEAEKEANQDRTPVKSKDGLVDRSPRSPFK.

One can recognise a Phosphatase tensin-type domain in the interval 5 to 193; it reads RRLFYRKPPD…QYICKMDDEL (189 aa). Cys126 serves as the catalytic Phosphocysteine intermediate. The region spanning 199–338 is the C2 tensin-type domain; it reads PIPFTLDCVI…FKAEVLFSEF (140 aa). 3 disordered regions span residues 688–709, 1025–1240, and 1631–1669; these read QGSSFQANGDPTCANTSTDANE, DAGP…GHGL, and IEADKKKAQKEAEKEANQDRTPVKSKDGLVDRSPRSPFK. A compositionally biased stretch (basic and acidic residues) spans 1036 to 1050; the sequence is LEWKRCPHHPPERPH. 4 stretches are compositionally biased toward pro residues: residues 1060–1069, 1098–1127, 1136–1190, and 1198–1230; these read PSPPSPPPPQ, APPPPSIGAGAPPPPPPPGGITGVPPPPPI, PPAP…PPPR, and PPTPPGAPAPPMPPGVPGGPPPPPGGRGLPAPP. Residues 1247 to 1646 form the FH2 domain; sequence NSAATARRST…KAQKEAEKEA (400 aa).

The protein belongs to the formin-like family. Class-II subfamily.

This is Formin-like protein 12 (FH12) from Oryza sativa subsp. japonica (Rice).